Reading from the N-terminus, the 541-residue chain is T-complex protein 1 subunit epsilon (541 aa).

Position 2 is an N-acetylalanine (Ala2). Residue Lys20 forms a Glycyl lysine isopeptide (Lys-Gly) (interchain with G-Cter in SUMO2) linkage. Ser26 carries the phosphoserine modification. Residue Gly53 coordinates ADP. Gly53 lines the ATP pocket. Asp104 is a Mg(2+) binding site. ADP is bound by residues Gly105, Thr106, Thr107, and Ser175. The ATP site is built by Thr106 and Thr107. Residues Lys210, Lys214, Lys265, Lys275, and Lys279 each participate in a glycyl lysine isopeptide (Lys-Gly) (interchain with G-Cter in SUMO2) cross-link. Position 346 is a phosphoserine (Ser346). Lys392 is covalently cross-linked (Glycyl lysine isopeptide (Lys-Gly) (interchain with G-Cter in SUMO2)). Gly422, Asp492, Glu508, and Lys513 together coordinate ADP. Position 422 (Gly422) interacts with ATP. Ser539 carries the post-translational modification Phosphoserine.

This sequence belongs to the TCP-1 chaperonin family. In terms of assembly, component of the chaperonin-containing T-complex (TRiC), a hexadecamer composed of two identical back-to-back stacked rings enclosing a protein folding chamber. Each ring is made up of eight different subunits: TCP1/CCT1, CCT2, CCT3, CCT4, CCT5, CCT6A/CCT6, CCT7, CCT8. Interacts with PACRG. Interacts with DNAAF4. Interacts with DLEC1. Interacts with SPMAP2. Ubiquitinated by the DCX(DCAF12) complex specifically recognizes the diglutamate (Glu-Glu) at the C-terminus, leading to its degradation.

It localises to the cytoplasm. It is found in the cytoskeleton. Its subcellular location is the microtubule organizing center. The protein resides in the centrosome. The catalysed reaction is ATP + H2O = ADP + phosphate + H(+). Its function is as follows. Component of the chaperonin-containing T-complex (TRiC), a molecular chaperone complex that assists the folding of actin, tubulin and other proteins upon ATP hydrolysis. The TRiC complex mediates the folding of WRAP53/TCAB1, thereby regulating telomere maintenance. As part of the TRiC complex may play a role in the assembly of BBSome, a complex involved in ciliogenesis regulating transports vesicles to the cilia. The chain is T-complex protein 1 subunit epsilon (Cct5) from Rattus norvegicus (Rat).